The chain runs to 366 residues: Cytochrome c peroxidase, mitochondrial (366 aa).

The Proton acceptor role is filled by H123. Positions 195–206 (IEWRPGRVDDNT) are enriched in basic and acidic residues. Residues 195 to 218 (IEWRPGRVDDNTASKVPPNGRLPD) are disordered. Heme b is bound at residue H247. The active-site Tryptophan radical intermediate is W263.

It belongs to the peroxidase family. Cytochrome c peroxidase subfamily. As to quaternary structure, forms a one-to-one complex with cytochrome c. It depends on heme b as a cofactor.

It localises to the mitochondrion matrix. The protein resides in the mitochondrion intermembrane space. The enzyme catalyses 2 Fe(II)-[cytochrome c] + H2O2 + 2 H(+) = 2 Fe(III)-[cytochrome c] + 2 H2O. Destroys radicals which are normally produced within the cells and which are toxic to biological systems. The polypeptide is Cytochrome c peroxidase, mitochondrial (CCP1) (Candida albicans (strain SC5314 / ATCC MYA-2876) (Yeast)).